Reading from the N-terminus, the 405-residue chain is Tryptophan synthase beta chain (405 aa).

Position 98 is an N6-(pyridoxal phosphate)lysine (Lys-98).

This sequence belongs to the TrpB family. As to quaternary structure, tetramer of two alpha and two beta chains. Requires pyridoxal 5'-phosphate as cofactor.

It catalyses the reaction (1S,2R)-1-C-(indol-3-yl)glycerol 3-phosphate + L-serine = D-glyceraldehyde 3-phosphate + L-tryptophan + H2O. Its pathway is amino-acid biosynthesis; L-tryptophan biosynthesis; L-tryptophan from chorismate: step 5/5. Functionally, the beta subunit is responsible for the synthesis of L-tryptophan from indole and L-serine. The protein is Tryptophan synthase beta chain (trpB) of Xylella fastidiosa (strain 9a5c).